The chain runs to 398 residues: 4-hydroxy-3-methylbut-2-en-1-yl diphosphate synthase (ferredoxin) (398 aa).

Cys306, Cys309, Cys340, and Glu347 together coordinate [4Fe-4S] cluster.

It belongs to the IspG family. Requires [4Fe-4S] cluster as cofactor.

It carries out the reaction (2E)-4-hydroxy-3-methylbut-2-enyl diphosphate + 2 oxidized [2Fe-2S]-[ferredoxin] + H2O = 2-C-methyl-D-erythritol 2,4-cyclic diphosphate + 2 reduced [2Fe-2S]-[ferredoxin] + H(+). It functions in the pathway isoprenoid biosynthesis; isopentenyl diphosphate biosynthesis via DXP pathway; isopentenyl diphosphate from 1-deoxy-D-xylulose 5-phosphate: step 5/6. Functionally, converts 2C-methyl-D-erythritol 2,4-cyclodiphosphate (ME-2,4cPP) into 1-hydroxy-2-methyl-2-(E)-butenyl 4-diphosphate. In Synechococcus sp. (strain CC9311), this protein is 4-hydroxy-3-methylbut-2-en-1-yl diphosphate synthase (ferredoxin).